Reading from the N-terminus, the 848-residue chain is Translation initiation factor IF-2 (848 aa).

The segment at 1–20 (MNESKGAVDSGLMSGKTERT) is disordered. Residues 346–516 (PRAPVVTVMG…LLMAELLELK (171 aa)) enclose the tr-type G domain. The tract at residues 355 to 362 (GHVDHGKT) is G1. A GTP-binding site is contributed by 355–362 (GHVDHGKT). The tract at residues 380–384 (GITQH) is G2. A G3 region spans residues 402–405 (DTPG). GTP-binding positions include 402–406 (DTPGH) and 456–459 (NKID). Positions 456–459 (NKID) are G4. Residues 492–494 (SAK) form a G5 region.

This sequence belongs to the TRAFAC class translation factor GTPase superfamily. Classic translation factor GTPase family. IF-2 subfamily.

The protein resides in the cytoplasm. In terms of biological role, one of the essential components for the initiation of protein synthesis. Protects formylmethionyl-tRNA from spontaneous hydrolysis and promotes its binding to the 30S ribosomal subunits. Also involved in the hydrolysis of GTP during the formation of the 70S ribosomal complex. The polypeptide is Translation initiation factor IF-2 (Ehrlichia canis (strain Jake)).